Consider the following 444-residue polypeptide: ATP-dependent protease ATPase subunit HslU (444 aa).

ATP-binding positions include Ile20 and 62–67; that span reads GVGKTE. The disordered stretch occupies residues 130 to 158; it reads EDRILDALVPPPRGASGEPERGEDNSARQ. The ATP site is built by Asp257, Glu322, and Arg394.

Belongs to the ClpX chaperone family. HslU subfamily. A double ring-shaped homohexamer of HslV is capped on each side by a ring-shaped HslU homohexamer. The assembly of the HslU/HslV complex is dependent on binding of ATP.

It localises to the cytoplasm. Functionally, ATPase subunit of a proteasome-like degradation complex; this subunit has chaperone activity. The binding of ATP and its subsequent hydrolysis by HslU are essential for unfolding of protein substrates subsequently hydrolyzed by HslV. HslU recognizes the N-terminal part of its protein substrates and unfolds these before they are guided to HslV for hydrolysis. The protein is ATP-dependent protease ATPase subunit HslU of Bordetella parapertussis (strain 12822 / ATCC BAA-587 / NCTC 13253).